We begin with the raw amino-acid sequence, 324 residues long: Probable WRKY transcription factor 53 (324 aa).

Residues 93–126 are disordered; that stretch reads NPGSVPESPASINGSPRSEEFADGGGSSESHHRQ. Residues 152-220 constitute a DNA-binding region (WRKY); sequence GLEGPQDDVF…YRGTHTCSQA (69 aa).

It belongs to the WRKY group III family. Interacts with ESR/ESP and UPL5. Binds to WRKY30. In terms of processing, ubiquitinated by UPL5. Ubiquitination leads to its subsequent degradation, thus controlling the timing of leaf senescence.

It is found in the nucleus. Transcription factor. Interacts specifically with the W box (5'-(T)TGAC[CT]-3'), a frequently occurring elicitor-responsive cis-acting element. May regulate the early events of leaf senescence. Negatively regulates the expression of ESR/ESP. Together with WRKY46 and WRKY70, promotes resistance to P.syringae, probably by enhancing salicylic acid (SA)- dependent genes. Contributes to the suppression of jasmonic acid (MeJA)-induced expression of PDF1.2. In Arabidopsis thaliana (Mouse-ear cress), this protein is Probable WRKY transcription factor 53.